Consider the following 155-residue polypeptide: V-type proton ATPase 16 kDa proteolipid subunit c (155 aa).

Residues 1–10 (MSEAKNGPEY) lie on the Lumenal side of the membrane. Residues 11–33 (ASFFAVMGASAAMVFSALGAAYG) traverse the membrane as a helical segment. The Cytoplasmic portion of the chain corresponds to 34 to 55 (TAKSGTGIAAMSVMRPEMIMKS). A helical transmembrane segment spans residues 56–76 (IIPVVMAGIIAIYGLVVAVLI). Over 77 to 92 (ANSLNDGISLYRSFLQ) the chain is Lumenal. A helical transmembrane segment spans residues 93 to 114 (LGAGLSVGLSGLAAGFAIGIVG). Topologically, residues 115–131 (DAGVRGTAQQPRLFVGM) are cytoplasmic. The helical transmembrane segment at 132–152 (ILILIFAEVLGLYGLIVALIL) threads the bilayer. Residues 153–155 (STK) are Lumenal-facing.

It belongs to the V-ATPase proteolipid subunit family. In terms of assembly, V-ATPase is a heteromultimeric enzyme made up of two complexes: the ATP-hydrolytic V1 complex and the proton translocation V0 complex. The V1 complex consists of three catalytic AB heterodimers that form a heterohexamer, three peripheral stalks each consisting of EG heterodimers, one central rotor including subunits D and F, and the regulatory subunits C and H. The proton translocation complex V0 consists of the proton transport subunit a, a ring of proteolipid subunits c9c'', rotary subunit d, subunits e and f, and the accessory subunits ATP6AP1/Ac45 and ATP6AP2/PRR. Interacts with the V0 complex V-ATPase subunit a4 ATP6V0A4. Interacts with LASS2. Interacts with RNF182; this interaction leads to ubiquitination and degradation via the proteasome pathway. Post-translationally, ubiquitinated by RNF182, leading to its degradation via the ubiquitin-proteasome pathway. In terms of tissue distribution, expressed in brain (at protein level).

The protein resides in the cytoplasmic vesicle. It is found in the clathrin-coated vesicle membrane. Its subcellular location is the secretory vesicle. It localises to the synaptic vesicle membrane. In terms of biological role, proton-conducting pore forming subunit of the V0 complex of vacuolar(H+)-ATPase (V-ATPase), a multisubunit enzyme composed of a peripheral complex (V1) that hydrolyzes ATP and a membrane integral complex (V0) that translocates protons. V-ATPase is responsible for acidifying and maintaining the pH of intracellular compartments and in some cell types, is targeted to the plasma membrane, where it is responsible for acidifying the extracellular environment. This chain is V-type proton ATPase 16 kDa proteolipid subunit c (ATP6V0C), found in Bos taurus (Bovine).